Reading from the N-terminus, the 237-residue chain is MNNHYLNQGCSFEKVSKNILKKNSHCNPWLSFFNQQDSEHQIFSLKQNDIIIFDVNSKLYIILAGCLIVKKVFRNRKKIILNVLTSEDSFGHTQFASNRFYYEVEALDVAQVLSIEYSIIMNICQNYPNFSVFLVNHLLLCSIKANHFMEIISHKSITNRLISLLLLLSEHNGISQNNGILIDLTITHKVLAQIIGSNRVSITRIISKLIHTKFISMQKKKVIIHDPILLSQRFSNR.

Residues 155–228 form the HTH crp-type domain; the sequence is KSITNRLISL…KKKVIIHDPI (74 aa). Residues 188–207 constitute a DNA-binding region (H-T-H motif); that stretch reads HKVLAQIIGSNRVSITRIIS.

The protein resides in the plastid. The protein localises to the chloroplast. The sequence is that of Putative HTH-type transcriptional regulator ycf28 (ycf28) from Porphyra purpurea (Red seaweed).